The primary structure comprises 28 residues: M-poneritoxin-Dq4b/U1-poneritoxin-Dq4c/U1-poneritoxin-Dq4d (28 aa).

A Methionine sulfoxide; in form U1-PONTX-Dq4d modification is found at M20. A28 is subject to Alanine amide; in form Dq-1362 and U1-PONTX-Dq4d.

In terms of processing, occurs in 3 forms, M-PONTX-Dq4b has an amidated Ala-28, U1-PONTX-Dq4d has an amidated Ala-28 and an oxidized Met-20, U1-PONTX-Dq4c has no modifications at either Met-20 or Ala-28. In terms of tissue distribution, expressed by the venom gland.

It localises to the secreted. Its function is as follows. M-poneritoxin-Dq4b: this synthetic peptide has antimicrobial activity against Gram-positive bacteria B.amyloliquefacies S499 (MIC=0.1 mM), L.monocytogenes 2231 and S.aureus ATCC 29213, against Gram-negative bacteria P.putida BTP1, P.aeruginosa PaO1 and E.coli ATCC 10536, and against the fungi S.cerevisiae, R.mucilaginosa and C.cucumerinum. Not active against the fungi F.oxysporum and B.cinerea. The sequence is that of M-poneritoxin-Dq4b/U1-poneritoxin-Dq4c/U1-poneritoxin-Dq4d from Dinoponera quadriceps (South American ant).